A 155-amino-acid polypeptide reads, in one-letter code: uncharacterized protein (155 aa).

Residues isoleucine 4–phenylalanine 65 form the HTH asnC-type domain. The H-T-H motif DNA-binding region spans leucine 23–glutamate 42.

This is an uncharacterized protein from Pyrococcus abyssi (strain GE5 / Orsay).